We begin with the raw amino-acid sequence, 363 residues long: Peroxin-36 (363 aa).

Topologically, residues 1 to 193 (MSNLEKQIRL…ESFFINSFEQ (193 aa)) are cytoplasmic. Disordered regions lie at residues 71–114 (QNHQ…DTST) and 128–157 (TNSN…SKSG). Positions 97–114 (VDSNSDSSSSETLIDTST) are enriched in low complexity. The helical transmembrane segment at 194–213 (LIALFDNFYFLSSLIGFNTS) threads the bilayer. Residues 214 to 232 (NSNSKITRLLRNFIKQASK) are Peroxisomal-facing. Residues 233 to 250 (IWLVIIFLTVKNLFIRMI) traverse the membrane as a helical segment. Topologically, residues 251-363 (KLNRTEKKVK…SSDDIIDEYA (113 aa)) are cytoplasmic.

Its subcellular location is the peroxisome membrane. Controls peroxisome morphology and abundance under conditions of peroxisome proliferation such as oleate and methanol media. Has additional function(s), which is not present in its functional homologs such as Saccharomyces cerevisea PEX34 or human PEX16. The polypeptide is Peroxin-36 (Komagataella phaffii (strain GS115 / ATCC 20864) (Yeast)).